Here is a 449-residue protein sequence, read N- to C-terminus: Glutamate--tRNA ligase (449 aa).

Positions 10-20 (PSPTGHLHIGN) match the 'HIGH' region motif. The 'KMSKS' region motif lies at 214 to 218 (KLSKR). An ATP-binding site is contributed by K217.

This sequence belongs to the class-I aminoacyl-tRNA synthetase family. Glutamate--tRNA ligase type 1 subfamily. Monomer.

The protein resides in the cytoplasm. The enzyme catalyses tRNA(Glu) + L-glutamate + ATP = L-glutamyl-tRNA(Glu) + AMP + diphosphate. In terms of biological role, catalyzes the attachment of glutamate to tRNA(Glu) in a two-step reaction: glutamate is first activated by ATP to form Glu-AMP and then transferred to the acceptor end of tRNA(Glu). This is Glutamate--tRNA ligase from Acholeplasma laidlawii (strain PG-8A).